Reading from the N-terminus, the 227-residue chain is GFP-like non-fluorescent chromoprotein (227 aa).

Positions 63-65 (AYG) form a cross-link, 5-imidazolinone (Ala-Gly). A 2,3-didehydrotyrosine modification is found at tyrosine 64.

This sequence belongs to the GFP family. As to quaternary structure, homotetramer. Contains a chromophore consisting of modified amino acid residues. The chromophore is formed by autocatalytic backbone condensation between Xaa-N and Gly-(N+2), and oxidation of Tyr-(N+1) to didehydrotyrosine. Maturation of the chromophore requires nothing other than molecular oxygen. The precise stereochemistry of the tyrosine has not been determined.

Functionally, non-fluorescent pigment protein that is mauve in color. The wild-type form is non-fluorescent. This is GFP-like non-fluorescent chromoprotein from Condylactis gigantea (Giant Caribbean anemone).